The sequence spans 325 residues: MKPILLQGHERSITQIKYNREGDLLFTVAKDPIVNVWYSVNGERLGTYMGHTGAVWCVDADWDTKHVLTGSADNSCRLWDCETGKQLALLKTNSAVRTCGFDFGGNIIMFSTDKQMGYQCFVSFFDLRDPSQIDSNEPYMKIPCNDSKITSAVWGPLGECIIAGHESGELNQYSAKSGEVLVNVKEHSRQINDIQLSRDMTMFVTASKDNTAKLFDSTSLEHQKTFRTERPVNSAALSPNYDHVVLGGGQEAMDVTTTSTRIGKFEARFFHLAFEEEFGRVKGHFGPINSVAFHPDGKSYSSGGEDGYVRIHYFDPQYFEFEFEA.

WD repeat units lie at residues 8–47 (GHERSITQIKYNREGDLLFTVAKDPIVNVWYSVNGERLGT), 50–91 (GHTG…ALLK), 144–183 (CNDSKITSAVWGPLGECIIAGHESGELNQYSAKSGEVLVN), and 186–225 (EHSRQINDIQLSRDMTMFVTASKDNTAKLFDSTSLEHQKT). Residue Lys-264 is modified to N6-acetyllysine. A Glycyl lysine isopeptide (Lys-Gly) (interchain with G-Cter in ubiquitin) cross-link involves residue Lys-282. The stretch at 283 to 324 (GHFGPINSVAFHPDGKSYSSGGEDGYVRIHYFDPQYFEFEFE) is one WD 5 repeat. Tyr-308 carries the post-translational modification Phosphotyrosine.

This sequence belongs to the eIF-3 subunit I family. In terms of assembly, component of the eukaryotic translation initiation factor 3 (eIF-3) complex, which is composed of 13 subunits: EIF3A, EIF3B, EIF3C, EIF3D, EIF3E, EIF3F, EIF3G, EIF3H, EIF3I, EIF3J, EIF3K, EIF3L and EIF3M. The eIF-3 complex appears to include 3 stable modules: module A is composed of EIF3A, EIF3B, EIF3G and EIF3I; module B is composed of EIF3F, EIF3H, and EIF3M; and module C is composed of EIF3C, EIF3D, EIF3E, EIF3K and EIF3L. EIF3C of module C binds EIF3B of module A and EIF3H of module B, thereby linking the three modules. EIF3J is a labile subunit that binds to the eIF-3 complex via EIF3B. The eIF-3 complex interacts with RPS6KB1 under conditions of nutrient depletion. Mitogenic stimulation leads to binding and activation of a complex composed of MTOR and RPTOR, leading to phosphorylation and release of RPS6KB1 and binding of EIF4B to eIF-3. In terms of processing, phosphorylated by TGF-beta type II receptor.

It localises to the cytoplasm. Component of the eukaryotic translation initiation factor 3 (eIF-3) complex, which is required for several steps in the initiation of protein synthesis. The eIF-3 complex associates with the 40S ribosome and facilitates the recruitment of eIF-1, eIF-1A, eIF-2:GTP:methionyl-tRNAi and eIF-5 to form the 43S pre-initiation complex (43S PIC). The eIF-3 complex stimulates mRNA recruitment to the 43S PIC and scanning of the mRNA for AUG recognition. The eIF-3 complex is also required for disassembly and recycling of post-termination ribosomal complexes and subsequently prevents premature joining of the 40S and 60S ribosomal subunits prior to initiation. The eIF-3 complex specifically targets and initiates translation of a subset of mRNAs involved in cell proliferation, including cell cycling, differentiation and apoptosis, and uses different modes of RNA stem-loop binding to exert either translational activation or repression. The protein is Eukaryotic translation initiation factor 3 subunit I (Eif3i) of Rattus norvegicus (Rat).